The chain runs to 238 residues: Probable septum site-determining protein MinC (238 aa).

The protein belongs to the MinC family. Interacts with MinD and FtsZ.

Its function is as follows. Cell division inhibitor that blocks the formation of polar Z ring septums. Rapidly oscillates between the poles of the cell to destabilize FtsZ filaments that have formed before they mature into polar Z rings. Prevents FtsZ polymerization. The protein is Probable septum site-determining protein MinC of Xylella fastidiosa (strain M23).